The sequence spans 832 residues: FAST kinase domain-containing protein 1, mitochondrial (832 aa).

Positions 765–825 constitute an RAP domain; it reads VAIEFLDSKA…KDAWMDYLRK (61 aa).

This sequence belongs to the FAST kinase family.

The protein localises to the mitochondrion. Functionally, may regulate the stability of some mitochondrial mRNA species. The sequence is that of FAST kinase domain-containing protein 1, mitochondrial (fastkd1) from Xenopus laevis (African clawed frog).